The sequence spans 373 residues: Anhydro-N-acetylmuramic acid kinase (373 aa).

ATP is bound at residue 12 to 19 (GTSLDGVD).

This sequence belongs to the anhydro-N-acetylmuramic acid kinase family.

The enzyme catalyses 1,6-anhydro-N-acetyl-beta-muramate + ATP + H2O = N-acetyl-D-muramate 6-phosphate + ADP + H(+). It participates in amino-sugar metabolism; 1,6-anhydro-N-acetylmuramate degradation. The protein operates within cell wall biogenesis; peptidoglycan recycling. Functionally, catalyzes the specific phosphorylation of 1,6-anhydro-N-acetylmuramic acid (anhMurNAc) with the simultaneous cleavage of the 1,6-anhydro ring, generating MurNAc-6-P. Is required for the utilization of anhMurNAc either imported from the medium or derived from its own cell wall murein, and thus plays a role in cell wall recycling. The chain is Anhydro-N-acetylmuramic acid kinase from Salmonella agona (strain SL483).